Here is a 2771-residue protein sequence, read N- to C-terminus: Kinesin-like protein KIN-12D (2771 aa).

2 stretches are compositionally biased toward basic and acidic residues: residues 1–13 (MSKE…RDSD) and 40–54 (KNPK…DRTP). Disordered regions lie at residues 1 to 73 (MSKE…TPDK) and 117 to 139 (YSET…GSCY). Over residues 118–131 (SETNSTQNTPTKSV) the composition is skewed to polar residues. The Kinesin motor domain maps to 193-530 (NVQILIRVRP…LKFAQRAKLI (338 aa)). Residue 274–281 (GQTGSGKT) coordinates ATP. 3 microtubules-binding regions span residues 400–404 (SSRSH), 431–437 (VDLAGSE), and 479–483 (HIPYR). Coiled coils occupy residues 1033–1110 (AATA…NEME), 1267–1331 (ELKQ…MKEK), 1410–1505 (IILL…YVEN), 2108–2390 (ELED…EQVK), and 2512–2677 (RERD…LAQE). Basic residues predominate over residues 2727 to 2736 (LKGKAKSRRS). The tract at residues 2727–2771 (LKGKAKSRRSRNPERKMPSMPSPRRSWSQSPRSMSQVPFFSSLDR) is disordered. A compositionally biased stretch (low complexity) spans 2744–2762 (PSMPSPRRSWSQSPRSMSQ).

The protein belongs to the TRAFAC class myosin-kinesin ATPase superfamily. Kinesin family. KIN-12 subfamily. Expressed in tissues enriched in dividing cells, such as root meristems, root primordia, and leaf primordia/young leaves.

The protein localises to the cytoplasm. It localises to the cytoskeleton. Its subcellular location is the phragmoplast. Its function is as follows. Involved in the spatial control of cytokinesis by a proper phragmoplast guidance. In Arabidopsis thaliana (Mouse-ear cress), this protein is Kinesin-like protein KIN-12D.